The primary structure comprises 224 residues: DNA mismatch repair protein MutH (224 aa).

It belongs to the MutH family.

Its subcellular location is the cytoplasm. Its function is as follows. Sequence-specific endonuclease that cleaves unmethylated GATC sequences. It is involved in DNA mismatch repair. The polypeptide is DNA mismatch repair protein MutH (Shewanella amazonensis (strain ATCC BAA-1098 / SB2B)).